Consider the following 215-residue polypeptide: Myelin protein zero-like protein 2 (215 aa).

The first 26 residues, 1–26 (MYGKSPALVLPLLLSLQLTALCPTEA), serve as a signal peptide directing secretion. The 115-residue stretch at 27–141 (VEIYTSGALE…DGLVGTIRLS (115 aa)) folds into the Ig-like V-type domain. Residues 27–154 (VEIYTSGALE…TVPFSEIYFL (128 aa)) are Extracellular-facing. 2 N-linked (GlcNAc...) asparagine glycosylation sites follow: Asn-39 and Asn-118. A disulfide bond links Cys-47 and Cys-123. A helical membrane pass occupies residues 155 to 175 (AVAIGSACALMIIVVIVVVLF). The Cytoplasmic portion of the chain corresponds to 176-215 (QHFRKKRWADRADKAEGTKSKEEEKLNQGNKVSVFVEDTD). Residues 187–201 (ADKAEGTKSKEEEKL) are compositionally biased toward basic and acidic residues. Residues 187-215 (ADKAEGTKSKEEEKLNQGNKVSVFVEDTD) are disordered.

Belongs to the myelin P0 protein family. As to expression, widely expressed. Expressed in the cochlea, in Deiters' cells, possibly at contact sites with the basilar membrane. Expressed in both outer and inner auditory hair cells. In the stria vascularis, detected in the basal cell layer. Not detected in thymocytes, lymphocytes, macrophage or dendritic cells.

The protein localises to the membrane. In terms of biological role, mediates homophilic cell-cell adhesion. This chain is Myelin protein zero-like protein 2 (Mpzl2), found in Mus musculus (Mouse).